The chain runs to 278 residues: Ras-related protein Rab-40B (278 aa).

GTP contacts are provided by Ser-23, Gly-26, and Lys-27. The switch-I stretch occupies residues 41-49 (SPYGHPAGI). Asp-69 is a Mg(2+) binding site. GTP-binding residues include Gly-72, Asn-126, and Arg-127. Positions 72-88 (GQGRFCTIFRSYSRGAQ) are switch-II. Residues 175–228 (LLRHGMDRLWRPSKVLSLQELCCRAVVSCTPGHLVDKLPLPVALRSHLKSFSMA) enclose the SOCS box domain. The disordered stretch occupies residues 245-278 (ANSSHKRNSFRKVRTIRPPQSPPRNCARNSCKIS). The span at 248-259 (SHKRNSFRKVRT) shows a compositional bias: basic residues. Cys-270 carries S-palmitoyl cysteine lipidation. Cys-275 is lipidated: S-geranylgeranyl cysteine.

The protein belongs to the small GTPase superfamily. Rab family. Component of the cullin-5-RING E3 ubiquitin-protein ligase complex (ECS(RAB40B) complex) composed of CUL5, Elongin BC (ELOB and ELOC), RNF7/RBX2 and RAB40B; RAB40B interaction with ECS complex is GTP-independent. Binds (GTP-bound) LIMA1; interaction promotes LIMA1 subcellular localization in lamellipodia during cell migration. Interacts (GTP-bound) with TKS5/SH3PXD2A (via PX domain); interaction promotes invadopodia-mediated extracellular matrix degradation. Mg(2+) is required as a cofactor.

The protein localises to the cell membrane. It localises to the cytoplasm. It is found in the cytosol. Its subcellular location is the cell projection. The protein resides in the lamellipodium membrane. The protein localises to the ruffle. It carries out the reaction GTP + H2O = GDP + phosphate + H(+). Its pathway is protein modification; protein ubiquitination. Its activity is regulated as follows. Regulated by guanine nucleotide exchange factors (GEFs) which promote the exchange of bound GDP for free GTP. Regulated by GTPase activating proteins (GAPs) which increase the GTP hydrolysis activity. Inhibited by GDP dissociation inhibitors (GDIs). Functionally, RAB40B small GTPase acts as substrate-recognition components of the ECS(RAB40B) E3 ubiquitin ligase complex which mediates the ubiquitination of target proteins. The Rab40 subfamily belongs to the Rab family that are key regulators of intracellular membrane trafficking, from the formation of transport vesicles to their fusion with membranes. Rabs cycle between an inactive GDP-bound form and an active GTP-bound form that is able to recruit to membranes different sets of downstream effectors directly responsible for vesicle formation, movement, tethering and fusion. As part of the ECS(RAB40B) complex, GTP-bound RAB40B promotes LIMA1/EPLIN ubiquitination and degradation, thereby regulating leading-edge actin dynamics during cell migration. As part of the ECS(RAB40B) complex, GTP-bound RAB40B also ubiquitinates RAP2A GTPase which promotes its localization to lamellipodia and activation to drive cell migration. The ECS(RAB40B) complex does not mediate canonical ubiquitin-dependent degradation of RAP2. RAB40B also binds TKS5/SH3PXD2A effector independently from ECS complex to promote invadopodia-mediated extracellular matrix degradation. This is Ras-related protein Rab-40B from Mus musculus (Mouse).